Consider the following 156-residue polypeptide: Bursicon (156 aa).

An N-terminal signal peptide occupies residues 1-26 (MYALDFLFIAFVYFAACHIQEKPVRA). Cystine bridges form between cysteine 37–cysteine 86, cysteine 51–cysteine 100, cysteine 61–cysteine 121, cysteine 65–cysteine 123, and cysteine 83–cysteine 126. The 91-residue stretch at 37 to 127 (CQMTPVIHIL…PLECMCRPCG (91 aa)) folds into the CTCK domain.

As to quaternary structure, heterodimer of burs and pburs.

It is found in the secreted. Functionally, final heterodimeric neurohormone released at the end of the molting cycle, involved in the sclerotization (tanning) of the insect cuticle, melanization and wing spreading. In Manduca sexta (Tobacco hawkmoth), this protein is Bursicon.